A 276-amino-acid chain; its full sequence is Formamidopyrimidine-DNA glycosylase (276 aa).

P2 serves as the catalytic Schiff-base intermediate with DNA. E3 functions as the Proton donor in the catalytic mechanism. Catalysis depends on K58, which acts as the Proton donor; for beta-elimination activity. Residues H94, R112, and R157 each contribute to the DNA site. The FPG-type zinc finger occupies 242–276; that stretch reads FVYDRAGEPCRVCGAPIRQIVQGQRSTYYCPNCQR. R266 acts as the Proton donor; for delta-elimination activity in catalysis.

Belongs to the FPG family. Monomer. Requires Zn(2+) as cofactor.

It carries out the reaction Hydrolysis of DNA containing ring-opened 7-methylguanine residues, releasing 2,6-diamino-4-hydroxy-5-(N-methyl)formamidopyrimidine.. The enzyme catalyses 2'-deoxyribonucleotide-(2'-deoxyribose 5'-phosphate)-2'-deoxyribonucleotide-DNA = a 3'-end 2'-deoxyribonucleotide-(2,3-dehydro-2,3-deoxyribose 5'-phosphate)-DNA + a 5'-end 5'-phospho-2'-deoxyribonucleoside-DNA + H(+). Involved in base excision repair of DNA damaged by oxidation or by mutagenic agents. Acts as a DNA glycosylase that recognizes and removes damaged bases. Has a preference for oxidized purines, such as 7,8-dihydro-8-oxoguanine (8-oxoG). Has AP (apurinic/apyrimidinic) lyase activity and introduces nicks in the DNA strand. Cleaves the DNA backbone by beta-delta elimination to generate a single-strand break at the site of the removed base with both 3'- and 5'-phosphates. This is Formamidopyrimidine-DNA glycosylase from Burkholderia thailandensis (strain ATCC 700388 / DSM 13276 / CCUG 48851 / CIP 106301 / E264).